The following is a 106-amino-acid chain: Cell division protein FtsB (106 aa).

The Cytoplasmic portion of the chain corresponds to methionine 1–lysine 3. Residues leucine 4–leucine 21 traverse the membrane as a helical segment. Topologically, residues glycine 22–lysine 106 are periplasmic. Positions glutamine 40–glycine 62 form a coiled coil.

The protein belongs to the FtsB family. As to quaternary structure, part of a complex composed of FtsB, FtsL and FtsQ.

The protein resides in the cell inner membrane. Essential cell division protein. May link together the upstream cell division proteins, which are predominantly cytoplasmic, with the downstream cell division proteins, which are predominantly periplasmic. This is Cell division protein FtsB from Serratia proteamaculans (strain 568).